Reading from the N-terminus, the 373-residue chain is SWI/SNF-related matrix-associated actin-dependent regulator of chromatin subfamily B member 1 (373 aa).

The tract at residues 1 to 101 is DNA-binding; that stretch reads MALSKAFGQK…DEKYKAVSIS (101 aa).

Belongs to the SNF5 family. In terms of assembly, component of the multiprotein chromatin-remodeling complexes SWI/SNF. Component of neural progenitors-specific chromatin remodeling complex (npBAF complex) and the neuron-specific chromatin remodeling complex (nBAF complex). Component of the BAF (SWI/SNF) chromatin remodeling complex. Component of the SWI/SNF-B (PBAF) chromatin remodeling complex. Binds to double-stranded DNA.

It is found in the nucleus. Functionally, involved in chromatin-remodeling. Core component of the BAF (SWI/SNF) complex. This ATP-dependent chromatin-remodeling complex plays important roles in cell proliferation and differentiation, in cellular antiviral activities and inhibition of tumor formation. Belongs to the neural progenitors-specific chromatin remodeling complex (npBAF complex) and the neuron-specific chromatin remodeling complex (nBAF complex) and may play a role in neural development. In Dichotomyctere fluviatilis (Green pufferfish), this protein is SWI/SNF-related matrix-associated actin-dependent regulator of chromatin subfamily B member 1 (smarcb1).